Consider the following 437-residue polypeptide: ATP-dependent RNA helicase RhlB (437 aa).

The Q motif signature appears at Gln-9 to Ala-37. The Helicase ATP-binding domain maps to Leu-40–Val-219. ATP is bound at residue Ala-53–Thr-60. Positions Asp-165–Asp-168 match the DEAD box motif. Residues Ala-245 to Ile-390 form the Helicase C-terminal domain. The segment at Ile-397–Ser-437 is disordered. The span at Gly-417 to Gln-428 shows a compositional bias: basic residues.

It belongs to the DEAD box helicase family. RhlB subfamily. In terms of assembly, component of the RNA degradosome, which is a multiprotein complex involved in RNA processing and mRNA degradation.

The protein localises to the cytoplasm. It catalyses the reaction ATP + H2O = ADP + phosphate + H(+). Its function is as follows. DEAD-box RNA helicase involved in RNA degradation. Has RNA-dependent ATPase activity and unwinds double-stranded RNA. The protein is ATP-dependent RNA helicase RhlB of Vibrio parahaemolyticus serotype O3:K6 (strain RIMD 2210633).